The sequence spans 70 residues: Cytoinsectotoxin-2c (70 aa).

This sequence belongs to the cationic peptide 06 (cytoinsectotoxin) family. Expressed by the venom gland.

It localises to the secreted. Its function is as follows. Insecticidal and antimicrobial peptide. Has insecticidal activity against larvae of flesh fly S.carnaria. Has antibacterial activity against Gram-positive bacterium B.subtilis B-501 (MIC=1.25 uM) and Gram-negative bacterium E.coli DH5alpha (MIC=2.5 uM). This is Cytoinsectotoxin-2c from Lachesana tarabaevi (Spider).